A 269-amino-acid polypeptide reads, in one-letter code: Protein CURLY FLAG LEAF 1 (269 aa).

Positions 17–44 are disordered; the sequence is SLNGGGGGGGGRRRGRRAAAAEGSDDSE. The EAR signature appears at 47 to 52; the sequence is TVELNS. A WW domain is found at 54–88; the sequence is VALPYHWEQCLDIRTGQVYYINWEDGTRTTIDPRS. 2 disordered regions span residues 83–133 and 174–218; these read TIDP…SGYT and GDDE…SGAG. Composition is skewed to low complexity over residues 87 to 106, 121 to 133, and 180 to 202; these read RSSS…SSSR, AAAA…SGYT, and SSSS…AVSS. Residues 203–212 are compositionally biased toward polar residues; it reads TLSSFSPTDE.

In terms of assembly, binds to HDG1.

Its function is as follows. Negatively regulates the cuticle development probably by interacting with the HD-ZIP IV transcription factor HDG1. The protein is Protein CURLY FLAG LEAF 1 of Oryza sativa subsp. indica (Rice).